Consider the following 572-residue polypeptide: Moesin (572 aa).

The region spanning 1–294 (MPRGVAVRVT…GNHELYMRRR (294 aa)) is the FERM domain. Disordered stretches follow at residues 444–508 (SQER…SYLP) and 523–544 (LQAMKDESKGEDRYDKIHQENI). Over residues 454–475 (AQEAAAAQHAAQLAAQREAQQL) the composition is skewed to low complexity. The segment covering 480 to 502 (EGEEDEQDHELEVQQDDNDDLDD) has biased composition (acidic residues). The span at 525–544 (AMKDESKGEDRYDKIHQENI) shows a compositional bias: basic and acidic residues.

It localises to the cell membrane. Its subcellular location is the cytoplasm. It is found in the cytoskeleton. The protein localises to the cell projection. Probably involved in connections of major cytoskeletal structures to the plasma membrane. This is Moesin from Lytechinus variegatus (Green sea urchin).